Here is a 439-residue protein sequence, read N- to C-terminus: Xylose isomerase (439 aa).

Active-site residues include histidine 100 and aspartate 103. Mg(2+) is bound by residues glutamate 231, glutamate 267, histidine 270, aspartate 295, aspartate 306, aspartate 308, and aspartate 338.

This sequence belongs to the xylose isomerase family. In terms of assembly, homotetramer. Mg(2+) is required as a cofactor.

Its subcellular location is the cytoplasm. It carries out the reaction alpha-D-xylose = alpha-D-xylulofuranose. This chain is Xylose isomerase, found in Rhodopirellula baltica (strain DSM 10527 / NCIMB 13988 / SH1).